The chain runs to 564 residues: Phosphoinositide phospholipase C 3 (564 aa).

Positions 19-54 constitute an EF-hand domain; it reads TRQPPVSIKRLFEAYSRNGKMSFDELLRFVSEVQGE. One can recognise a PI-PLC X-box domain in the interval 106 to 250; it reads HDMKAPLSHY…LKGKILISTK (145 aa). Residues histidine 121 and histidine 167 contribute to the active site. A PI-PLC Y-box domain is found at 296–412; it reads RDLIAIHAAN…GYVKKPRILL (117 aa). Residues 406–539 enclose the C2 domain; the sequence is KKPRILLDEH…KSGVRAVRLH (134 aa). Aspartate 450, aspartate 456, aspartate 509, aspartate 511, and aspartate 517 together coordinate Ca(2+).

Ca(2+) is required as a cofactor. As to expression, expressed in leaves, roots and siliques, but not in flowers.

It localises to the cell membrane. It carries out the reaction a 1,2-diacyl-sn-glycero-3-phospho-(1D-myo-inositol-4,5-bisphosphate) + H2O = 1D-myo-inositol 1,4,5-trisphosphate + a 1,2-diacyl-sn-glycerol + H(+). The production of the second messenger molecules diacylglycerol (DAG) and inositol 1,4,5-trisphosphate (IP3) is mediated by activated phosphatidylinositol-specific phospholipase C enzymes. The sequence is that of Phosphoinositide phospholipase C 3 (PLC3) from Arabidopsis thaliana (Mouse-ear cress).